The sequence spans 48 residues: Toxin CSTX-15 (48 aa).

Intrachain disulfides connect C3/C18, C10/C27, C17/C42, and C29/C40.

The protein belongs to the neurotoxin 19 (CSTX) family. 12 subfamily. As to quaternary structure, heterodimer of A and B chains; disulfide-linked. Contains 4 disulfide bonds. In terms of tissue distribution, expressed by the venom gland.

The protein localises to the secreted. The chain is Toxin CSTX-15 from Cupiennius salei (American wandering spider).